The following is a 91-amino-acid chain: Apolipoprotein C-III (91 aa).

The N-terminal stretch at 1-20 is a signal peptide; the sequence is MQPRVLLAVTLLALLVSARA. Met63 carries the methionine sulfoxide modification. Positions 68-91 are lipid-binding; it reads DSMKGYWTSLIGRLSGFLDSTPSS.

Belongs to the apolipoprotein C3 family.

The protein resides in the secreted. Functionally, component of triglyceride-rich very low density lipoproteins (VLDL) and high density lipoproteins (HDL) in plasma. Plays a multifaceted role in triglyceride homeostasis. Intracellularly, promotes hepatic very low density lipoprotein 1 (VLDL1) assembly and secretion; extracellularly, attenuates hydrolysis and clearance of triglyceride-rich lipoproteins (TRLs). Impairs the lipolysis of TRLs by inhibiting lipoprotein lipase and the hepatic uptake of TRLs by remnant receptors. Formed of several curved helices connected via semiflexible hinges, so that it can wrap tightly around the curved micelle surface and easily adapt to the different diameters of its natural binding partners. In Cavia porcellus (Guinea pig), this protein is Apolipoprotein C-III (APOC3).